The following is a 160-amino-acid chain: ATP synthase subunit delta, mitochondrial (160 aa).

The transit peptide at 1 to 22 (MLRSIIGKSASRSLNFVAKRSY) directs the protein to the mitochondrion.

The protein belongs to the ATPase epsilon chain family. In terms of assembly, F-type ATPases have 2 components, CF(1) - the catalytic core - and CF(0) - the membrane proton channel. CF(1) has five subunits: alpha(3), beta(3), gamma(1), delta(1), epsilon(1). CF(0) has three main subunits: a, b and c.

The protein resides in the mitochondrion. It localises to the mitochondrion inner membrane. In terms of biological role, mitochondrial membrane ATP synthase (F(1)F(0) ATP synthase or Complex V) produces ATP from ADP in the presence of a proton gradient across the membrane which is generated by electron transport complexes of the respiratory chain. F-type ATPases consist of two structural domains, F(1) - containing the extramembraneous catalytic core, and F(0) - containing the membrane proton channel, linked together by a central stalk and a peripheral stalk. During catalysis, ATP turnover in the catalytic domain of F(1) is coupled via a rotary mechanism of the central stalk subunits to proton translocation. Part of the complex F(1) domain and of the central stalk which is part of the complex rotary element. Rotation of the central stalk against the surrounding alpha(3)beta(3) subunits leads to hydrolysis of ATP in three separate catalytic sites on the beta subunits. The polypeptide is ATP synthase subunit delta, mitochondrial (ATP16) (Saccharomyces cerevisiae (strain ATCC 204508 / S288c) (Baker's yeast)).